A 487-amino-acid polypeptide reads, in one-letter code: Epstein-Barr nuclear antigen 2 (487 aa).

The SMARCB1/INI1 binding stretch occupies residues 1–210; the sequence is MPTFYLALHG…TPPTPLPPAT (210 aa). 2 disordered regions span residues 52–121 and 258–487; these read VGEN…LGYD and SMHP…PSIQ. Positions 58 to 100 are enriched in pro residues; it reads VPPPLPPPPPPPPPPPPPPPPPPPPPPPPPPSPPPPPPPPPPP. The span at 101-118 shows a compositional bias: basic and acidic residues; that stretch reads QRRDAWTQEPSPLDRDPL. Pro residues-rich tracts occupy residues 286 to 307 and 319 to 333; these read PPMP…PPPG and SGPP…PPQP. Basic residues predominate over residues 344–366; it reads SRGRGRGRGRGRGKGKSRDKQRK. A run of 7 repeats spans residues 345 to 346, 347 to 348, 349 to 350, 351 to 352, 353 to 354, 355 to 356, and 357 to 358. Positions 345–358 are 6.5 X 2 AA tandem repeats of R-G; the sequence is RGRGRGRGRGRGKG. 2 short sequence motifs (PXLXP motif, interaction with host ZMYND11) span residues 383–387 and 437–441; these read PELSP and PILFP.

Belongs to the herpesviridae EBNA2 family. In terms of assembly, interacts with human SMARCB1/INI1, presumably generating an open chromatin conformation at the EBNA2-responsive target genes. Interacts with human WAPL. Interacts with host CBF1; this interaction allows transcriptional activation by EBNA2. Interacts with host general transcription factors GTF2B, ERCC2 and ERCC3. Interacts (via PXLXP motif) with host ZMYND11/BS69 (via MYND-type zinc finger). Interacts with host EBF1. In terms of processing, phosphorylated.

Its subcellular location is the host nucleus matrix. In terms of biological role, plays a key role in the activation of the host resting B-cell and stimulation of B-cell proliferation. Acts by up-regulating the expression of viral EBNA1-6, LMP1, LMP2A and LMP2B genes, as well as several host genes including CD21, CD23 and MYC. Activates transcription by acting as an adapter molecule that binds to cellular sequence-specific DNA-binding proteins such as host CBF1, SMARCB1 and SPI1. Once EBNA2 is near promoter sites, its acidic activating domain recruits basal and activation-associated transcription factors TFIIB, TAF40, TFIIH components ERCC2 and ERCC3, and CBP in order to promote transcription. Alternatively, EBNA2 can affect activities of cell cycle regulators and retard cell cycle progression at G2/M phase. It also induces chromosomal instability, by disrupting mitotic checkpoints, multi-nucleation and formation of micronuclei in infected cells. The protein is Epstein-Barr nuclear antigen 2 (EBNA2) of Homo sapiens (Human).